Reading from the N-terminus, the 142-residue chain is Hemoglobin F-I (142 aa).

The Globin domain occupies 2 to 142 (GLTTAQIKAI…AAGVLVAAMK (141 aa)). Position 95 (His95) interacts with heme b.

It belongs to the globin family. In terms of assembly, homotetramer.

In terms of biological role, hemoglobin F-I appears to function in storage, rather than transport of oxygen. This Urechis caupo (Innkeeper worm) protein is Hemoglobin F-I.